The following is a 337-amino-acid chain: uncharacterized protein (337 aa).

A coiled-coil region spans residues asparagine 248–leucine 276. Residues glycine 285–leucine 337 are disordered. Over residues arginine 287–glutamate 296 the composition is skewed to basic and acidic residues. Positions threonine 297–threonine 315 are enriched in polar residues.

This is an uncharacterized protein from Invertebrate iridescent virus 3 (IIV-3).